Reading from the N-terminus, the 635-residue chain is Chaperone protein DnaK (635 aa).

The residue at position 200 (T200) is a Phosphothreonine; by autocatalysis. The tract at residues 595-635 (KAQPLTEKVQAKSSAENTSKEKSKADDDVVDADFEEVKDDK) is disordered. Over residues 612–621 (TSKEKSKADD) the composition is skewed to basic and acidic residues. Residues 622 to 635 (DVVDADFEEVKDDK) are compositionally biased toward acidic residues.

Belongs to the heat shock protein 70 family.

Acts as a chaperone. The chain is Chaperone protein DnaK from Ruthia magnifica subsp. Calyptogena magnifica.